The chain runs to 600 residues: Molybdenum cofactor biosynthesis protein moc-5 (600 aa).

Positions 4 to 371 (RAGKKLFQWS…AVNNKKARHA (368 aa)) are molybdenum cofactor biosynthesis protein A. The 217-residue stretch at 68-284 (MFMREHTYLR…VDKYGDGVIR (217 aa)) folds into the Radical SAM core domain. Arginine 77 contacts GTP. [4Fe-4S] cluster contacts are provided by cysteine 84 and cysteine 88. Residue tyrosine 90 participates in S-adenosyl-L-methionine binding. Residue cysteine 91 coordinates [4Fe-4S] cluster. Residue arginine 127 participates in GTP binding. An S-adenosyl-L-methionine-binding site is contributed by glycine 131. A GTP-binding site is contributed by threonine 158. Serine 182 serves as a coordination point for S-adenosyl-L-methionine. Lysine 218 lines the GTP pocket. An S-adenosyl-L-methionine-binding site is contributed by methionine 252. 2 residues coordinate [4Fe-4S] cluster: cysteine 316 and cysteine 319. 321-323 (RLR) is a binding site for GTP. Cysteine 333 serves as a coordination point for [4Fe-4S] cluster. The tract at residues 369–390 (RHAVFRNGRSEEPAKSSNDSYR) is disordered. Positions 396-595 (TSASSILVHL…SGGKTTYTID (200 aa)) are molybdenum cofactor biosynthesis protein C. Aspartate 566 functions as the For molybdenum cofactor biosynthesis protein C activity in the catalytic mechanism.

It in the C-terminal section; belongs to the MoaC family. The protein in the N-terminal section; belongs to the radical SAM superfamily. MoaA family. As to quaternary structure, isoform a and isoform b probably form a heterooligomer. The cofactor is [4Fe-4S] cluster.

The enzyme catalyses GTP + AH2 + S-adenosyl-L-methionine = (8S)-3',8-cyclo-7,8-dihydroguanosine 5'-triphosphate + 5'-deoxyadenosine + L-methionine + A + H(+). The catalysed reaction is (8S)-3',8-cyclo-7,8-dihydroguanosine 5'-triphosphate = cyclic pyranopterin phosphate + diphosphate. It functions in the pathway cofactor biosynthesis; molybdopterin biosynthesis. Functionally, probably forms a complex with isoform b that catalyzes the conversion of 5'-GTP to cyclic pyranopterin monophosphate (cPMP). Catalyzes the cyclization of GTP to (8S)-3',8-cyclo-7,8-dihydroguanosine 5'-triphosphate and mocs1b catalyzes the subsequent conversion of (8S)-3',8-cyclo-7,8-dihydroguanosine 5'-triphosphate to cPMP. Its function is as follows. Probably forms a complex with isoform a that catalyzes the conversion of 5'-GTP to cyclic pyranopterin monophosphate (cPMP). The protein is Molybdenum cofactor biosynthesis protein moc-5 of Caenorhabditis elegans.